Consider the following 264-residue polypeptide: Aminoglycoside 3'-phosphotransferase (264 aa).

Catalysis depends on Asp-190, which acts as the Proton acceptor.

This sequence belongs to the aminoglycoside phosphotransferase family.

The enzyme catalyses kanamycin A + ATP = kanamycin 3'-phosphate + ADP + H(+). Its function is as follows. Resistance to kanamycin and structurally-related aminoglycosides, including amikacin. The polypeptide is Aminoglycoside 3'-phosphotransferase (aphA) (Enterococcus faecalis (Streptococcus faecalis)).